A 274-amino-acid polypeptide reads, in one-letter code: Oxidized low-density lipoprotein receptor 1 (274 aa).

Over residues 1–16 (MAVDDLKVKPMKDQPD) the composition is skewed to basic and acidic residues. Residues 1-25 (MAVDDLKVKPMKDQPDQKSNGKKPK) are disordered. The Cytoplasmic segment spans residues 1-31 (MAVDDLKVKPMKDQPDQKSNGKKPKGLRFLS). A helical; Signal-anchor for type II membrane protein transmembrane segment spans residues 32-54 (SPWWCPAAVALGVLCLGSLMTII). S-palmitoyl cysteine attachment occurs at residues Cys36 and Cys46. A neck region spans residues 55 to 150 (MLGMQLLQVS…SGPCPEDWLW (96 aa)). The Extracellular segment spans residues 55 to 274 (MLGMQLLQVS…QKKANLLRSE (220 aa)). Residues Asn73 and Asn139 are each glycosylated (N-linked (GlcNAc...) asparagine). A coiled-coil region spans residues 84-139 (QVLAQQQAEAASQESQRELKEMIETLAKRLDEKSKKQMELNHQYLNLQEALKRMDN). 3 cysteine pairs are disulfide-bonded: Cys144/Cys155, Cys172/Cys264, and Cys243/Cys256. The C-type lectin domain occupies 151–265 (HGKNCYLFSS…CILVAYSICQ (115 aa)).

In terms of assembly, homodimer; disulfide-linked. May form a hexamer composed of 3 homodimers. Interacts with HSP70. In terms of processing, N-glycosylated.

The protein localises to the cell membrane. The protein resides in the membrane raft. It is found in the secreted. Functionally, receptor that mediates the recognition, internalization and degradation of oxidatively modified low density lipoprotein (oxLDL) by vascular endothelial cells. OxLDL is a marker of atherosclerosis that induces vascular endothelial cell activation and dysfunction, resulting in pro-inflammatory responses, pro-oxidative conditions and apoptosis. Its association with oxLDL induces the activation of NF-kappa-B through an increased production of intracellular reactive oxygen and a variety of pro-atherogenic cellular responses including a reduction of nitric oxide (NO) release, monocyte adhesion and apoptosis. In addition to binding oxLDL, it acts as a receptor for the HSP70 protein involved in antigen cross-presentation to naive T-cells in dendritic cells, thereby participating in cell-mediated antigen cross-presentation. Also involved in inflammatory process, by acting as a leukocyte-adhesion molecule at the vascular interface in endotoxin-induced inflammation. Also acts as a receptor for advanced glycation end (AGE) products, activated platelets, monocytes, apoptotic cells and both Gram-negative and Gram-positive bacteria. This is Oxidized low-density lipoprotein receptor 1 (OLR1) from Oryctolagus cuniculus (Rabbit).